A 137-amino-acid chain; its full sequence is 14 kDa proline-rich protein DC2.15 (137 aa).

The N-terminal stretch at 1–25 (MGSKNSASVALFFTLNILFFALVSS) is a signal peptide. A disordered region spans residues 30 to 53 (PDPYKPKPKPTPKPTPTPYPSAGK). Over residues 38–48 (KPTPKPTPTPY) the composition is skewed to pro residues. A helical membrane pass occupies residues 88–104 (LEGLVNLEAAVCLCTAI).

The protein localises to the membrane. Its function is as follows. May be connected with the initiation of embryogenesis or with the metabolic changes produced by the removal of auxins. This is 14 kDa proline-rich protein DC2.15 from Daucus carota (Wild carrot).